The following is a 400-amino-acid chain: CinA-like protein (400 aa).

The protein belongs to the CinA family.

In Escherichia coli (strain SMS-3-5 / SECEC), this protein is CinA-like protein.